A 33-amino-acid polypeptide reads, in one-letter code: Cysteine-rich venom protein (33 aa).

A disordered region spans residues 1–33 (NVDFNSESTRRKKKQKEIVDLHNSLRRRVSPTA). Residues 24 to 33 (SLRRRVSPTA) are compositionally biased toward basic residues.

It belongs to the CRISP family. Contains 8 disulfide bonds. In terms of tissue distribution, expressed by the venom gland.

The protein localises to the secreted. Its function is as follows. Blocks contraction of smooth muscle elicited by high potassium-induced depolarization, but does not block caffeine-stimulated contraction. May target voltage-gated calcium channels on smooth muscle (Cav). This chain is Cysteine-rich venom protein, found in Naja naja (Indian cobra).